We begin with the raw amino-acid sequence, 283 residues long: Large ribosomal subunit protein uL2 (283 aa).

Disordered regions lie at residues 37-59 (AKKK…RGGG) and 219-283 (HKGI…RNSK). Residues 256–269 (WGKRHMGVKTRNNK) show a composition bias toward basic residues.

It belongs to the universal ribosomal protein uL2 family. In terms of assembly, part of the 50S ribosomal subunit. Forms a bridge to the 30S subunit in the 70S ribosome.

Its function is as follows. One of the primary rRNA binding proteins. Required for association of the 30S and 50S subunits to form the 70S ribosome, for tRNA binding and peptide bond formation. It has been suggested to have peptidyltransferase activity; this is somewhat controversial. Makes several contacts with the 16S rRNA in the 70S ribosome. The polypeptide is Large ribosomal subunit protein uL2 (Mycoplasmoides gallisepticum (strain R(low / passage 15 / clone 2)) (Mycoplasma gallisepticum)).